The sequence spans 358 residues: Vascular endothelial growth factor D (358 aa).

Positions 1 to 21 are cleaved as a signal peptide; that stretch reads MYGEWGMGNILMMFHVYLVQG. Positions 22–93 are excised as a propeptide; the sequence is FRSEHGPVKD…SRSASHRSTR (72 aa). 3 cysteine pairs are disulfide-bonded: Cys116/Cys158, Cys147/Cys194, and Cys151/Cys196. Residues Asn160 and Asn190 are each glycosylated (N-linked (GlcNAc...) asparagine). Positions 211-358 are excised as a propeptide; the sequence is SIQTPEEDEC…AQGLYSQENP (148 aa). The stretch at 227–242 is one 1; approximate repeat; the sequence is CPIDMLWDNTKCKCVL. The interval 227–323 is 4 X 16 AA repeats of C-X(10)-C-X-C-X(1,3)-C; sequence CPIDMLWDNT…PDTCSCEDRC (97 aa). A run of 3 repeats spans residues 263–278, 282–298, and 306–323. The N-linked (GlcNAc...) asparagine glycan is linked to Asn292.

Belongs to the PDGF/VEGF growth factor family. In terms of assembly, homodimer; non-covalent and antiparallel. In terms of processing, undergoes a complex proteolytic maturation which generates a variety of processed secreted forms with increased activity toward VEGFR-3 and VEGFR-2. VEGF-D first form an antiparallel homodimer linked by disulfide bonds before secretion. The fully processed VEGF-D is composed mostly of two VEGF homology domains (VHDs) bound by non-covalent interactions. In terms of tissue distribution, highly expressed in fetal and adult lung.

It is found in the secreted. In terms of biological role, growth factor active in angiogenesis, lymphangiogenesis and endothelial cell growth, stimulating their proliferation and migration and also has effects on the permeability of blood vessels. May function in the formation of the venous and lymphatic vascular systems during embryogenesis, and also in the maintenance of differentiated lymphatic endothelium in adults. Binds and activates VEGFR-3 (Flt4) receptor. The chain is Vascular endothelial growth factor D from Mus musculus (Mouse).